Consider the following 158-residue polypeptide: Protein GLUTAMINE DUMPER 1 (158 aa).

The Extracellular segment spans residues 1–36 (MRPLSVQSKFEDVATSTSVNHHGVTPQSPWHSPVPY). Residues 37 to 57 (LFGGLAAMLGLIAFALLILAC) form a helical membrane-spanning segment. Residues 58-158 (SYWRLSSSGE…DTGETTTTSH (101 aa)) are Cytoplasmic-facing. The interval 65 to 85 (SGEEDGQNVDEEKESRSGDKA) is disordered. Residues 66 to 76 (GEEDGQNVDEE) are compositionally biased toward acidic residues. The short motif at 96 to 100 (VIMAG) is the VIMAG element. A disordered region spans residues 126–158 (ISQEESVAKEEEKMREGEEEKVKDTGETTTTSH). Residues 131-151 (SVAKEEEKMREGEEEKVKDTG) are compositionally biased toward basic and acidic residues.

It belongs to the GLUTAMINE DUMPER 1 (TC 9.B.60) family. In terms of assembly, interacts with LOG2. In terms of processing, ubiquitinated by LOG2 (in vitro). In terms of tissue distribution, expressed in the vascular tissues and in hydathodes. Expressed in the phloem and xylem (at the protein level).

It localises to the cell membrane. Probable subunit of an amino acid transporter involved in the regulation of the amino acid metabolism. Stimulates amino acid export by activating nonselective amino acid facilitators. Required the interaction with the RING-type E3 ubiquitin-protein ligase LOG2 to fulfill its function. Plays a role in the Gln export at hydathodes, at xylem parenchyma into xylem sap and from mesophyll into leaf apoplasm. Acts upstream genes involved in the salicylic acid (SA) pathway and in the geminivirus-host interaction. In Arabidopsis thaliana (Mouse-ear cress), this protein is Protein GLUTAMINE DUMPER 1 (GDU1).